The primary structure comprises 100 residues: Protein alpha-2 (100 aa).

The sequence is that of Protein alpha-2 from Bos taurus (Bovine).